Consider the following 1231-residue polypeptide: Complement factor H (1231 aa).

The N-terminal stretch at 1–18 (MRLLAKIICLMLWAICVA) is a signal peptide. 20 consecutive Sushi domains span residues 19–82 (EDCN…KCQK), 83–143 (RPCG…ICEV), 144–207 (VKCL…KCVE), 208–264 (ISCK…SCEE), 265–322 (KSCD…RCTL), 324–386 (PCDY…VPCL), 387–444 (RKCY…RCIR), 446–507 (KTCS…TCIK), 515–566 (MNAR…ICYE), 567–625 (RECE…ICKE), 628–686 (QSCG…VCIV), 689–746 (STCG…QCVA), 751–805 (KKCK…NCSM), 809–866 (QLCP…LCVE), 868–928 (IPCS…QCEG), 929–986 (LPCK…SCIK), 987–1045 (TDCL…TCRD), 1046–1104 (TSCV…QCKD), 1107–1165 (GKCG…KCLH), and 1170–1230 (SREI…TCAK). Disulfide bonds link Cys-21–Cys-66, Cys-52–Cys-80, Cys-85–Cys-129, Cys-114–Cys-141, Cys-146–Cys-192, Cys-178–Cys-205, Cys-210–Cys-251, Cys-237–Cys-262, Cys-267–Cys-309, Cys-294–Cys-320, Cys-325–Cys-374, Cys-357–Cys-385, Cys-389–Cys-431, Cys-416–Cys-442, Cys-448–Cys-494, Cys-477–Cys-505, Cys-509–Cys-553, Cys-536–Cys-564, Cys-569–Cys-611, Cys-597–Cys-623, Cys-630–Cys-673, Cys-659–Cys-684, Cys-691–Cys-733, Cys-719–Cys-744, Cys-753–Cys-792, Cys-781–Cys-803, Cys-811–Cys-853, Cys-839–Cys-864, Cys-870–Cys-915, Cys-901–Cys-926, Cys-931–Cys-973, Cys-959–Cys-984, Cys-989–Cys-1032, Cys-1018–Cys-1043, Cys-1048–Cys-1091, Cys-1077–Cys-1102, Cys-1109–Cys-1152, Cys-1138–Cys-1163, Cys-1167–Cys-1218, and Cys-1201–Cys-1228. Asn-217 carries N-linked (GlcNAc...) (complex) asparagine glycosylation. An N-linked (GlcNAc...) asparagine glycan is attached at Asn-529. An N-linked (GlcNAc...) asparagine glycan is attached at Asn-718. Asn-802 and Asn-822 each carry an N-linked (GlcNAc...) asparagine glycan. Residues Asn-882 and Asn-911 are each glycosylated (N-linked (GlcNAc...) (complex) asparagine). Residue Asn-1029 is glycosylated (N-linked (GlcNAc...) (complex) asparagine). N-linked (GlcNAc...) asparagine glycosylation occurs at Asn-1095.

Homodimer. Also forms homooligomers. Interacts with complement protein C3b; this interaction inhibits complement activation. Interacts with complement protein C3d. Interacts with CR3/ITGAM; this interaction mediates adhesion of neutrophils to pathogens leading to pathogen clearance. Interacts with complement factor I. In terms of assembly, (Microbial infection) Interacts with West nile virus non-structural protein 1 (NS1); this interaction leads to the degradation of C3. As to quaternary structure, (Microbial infection) Interacts with C.albicans GPD2; the interaction is direct and leads to the degradation of C3 which enables the pathogen to evade the host innate immune system. (Microbial infection) Interacts with Neisseria meningitidis protein fHbp. In terms of assembly, (Microbial infection) Interacts with Borrelia burgdorferi outer surface protein E/OspE; this interaction recruits complement regulator factor H onto the bacterial surface to evade complement-mediated cell lysis. As to quaternary structure, (Microbial infection) Interacts with Streptococcus pneumoniae protein virulence factor choline-binding protein A/CbpAN; this interaction enables Streptococcus pneumoniae to evade surveillance by human complement system. (Microbial infection) Interacts with Staphylococcus aureus surface protein serine-aspartate repeat protein E/SdrE; this interaction sequesters CFH on the surface of S.aureus for complement evasion. In terms of assembly, (Microbial infection) Interacts with Staphylococcus aureus protein Sbi; this interaction inhibits the complement activation of the alternative pathway. As to quaternary structure, (Microbial infection) Interacts (via sushi 4-6 domains) with P.falciparum surface protein PF92; the interaction recruits CFH onto the merozoite surface preventing complement-mediated cell lysis. The interaction does not affect CFH activity. Interacts (via sushi 6-7 domains) with P.falciparum (strain NF54) GAP50; the interaction occurs in the vector mosquito midgut at the surface of the activated parasite gametocytes; the interaction protects the parasite from alternative complement pathway-mediated elimination. (Microbial infection) Interacts (via sushi 4-6 domains) with P.falciparum surface protein PF92; the interaction recruits FHL-1 isoform onto the merozoite surface preventing complement-mediated cell lysis. The interaction does not affect FHL-1 isoform activity. Interacts (via sushi 6-7 domains) with P.falciparum (strain NF54) GAP50; the interaction occurs in the vector mosquito midgut at the surface of the activated parasite gametocytes; the interaction protects the parasite from alternative complement pathway-mediated elimination. Post-translationally, sulfated on tyrosine residues. In terms of processing, according to a report, Asn-217 is not glycosylated. Another study observed glycosylation at this position. As to expression, expressed in the retinal pigment epithelium (at protein level). CFH is one of the most abundant complement components in blood where the liver is the major source of CFH protein in vivo. in addition, CFH is secreted by additional cell types including monocytes, fibroblasts, or endothelial cells.

The protein resides in the secreted. Functionally, glycoprotein that plays an essential role in maintaining a well-balanced immune response by modulating complement activation. Acts as a soluble inhibitor of complement, where its binding to self markers such as glycan structures prevents complement activation and amplification on cell surfaces. Accelerates the decay of the complement alternative pathway (AP) C3 convertase C3bBb, thus preventing local formation of more C3b, the central player of the complement amplification loop. As a cofactor of the serine protease factor I, CFH also regulates proteolytic degradation of already-deposited C3b. In addition, mediates several cellular responses through interaction with specific receptors. For example, interacts with CR3/ITGAM receptor and thereby mediates the adhesion of human neutrophils to different pathogens. In turn, these pathogens are phagocytosed and destroyed. In terms of biological role, (Microbial infection) In the mosquito midgut, binds to the surface of parasite P.falciparum gametocytes and protects the parasite from alternative complement pathway-mediated elimination. The protein is Complement factor H (CFH) of Homo sapiens (Human).